The chain runs to 58 residues: NADH dehydrogenase [ubiquinone] 1 beta subcomplex subunit 1 (58 aa).

A helical transmembrane segment spans residues 11–27; it reads HWVHVLVPMGFVIGCYL.

Belongs to the complex I NDUFB1 subunit family. As to quaternary structure, complex I is composed of 45 different subunits.

The protein localises to the mitochondrion inner membrane. Functionally, accessory subunit of the mitochondrial membrane respiratory chain NADH dehydrogenase (Complex I) that is believed not to be involved in catalysis. Complex I functions in the transfer of electrons from NADH to the respiratory chain. The immediate electron acceptor for the enzyme is believed to be ubiquinone. This is NADH dehydrogenase [ubiquinone] 1 beta subcomplex subunit 1 (NDUFB1) from Homo sapiens (Human).